The primary structure comprises 89 residues: MTENRANRKIRIGTVSSDKMDKTITVSVETVKQHPLYKKTIKTSKKYKAHDENNEAKTGDIVKIMETRPLSKDKRWRLVEIVQKAKTLQ.

This sequence belongs to the universal ribosomal protein uS17 family. As to quaternary structure, part of the 30S ribosomal subunit.

In terms of biological role, one of the primary rRNA binding proteins, it binds specifically to the 5'-end of 16S ribosomal RNA. The polypeptide is Small ribosomal subunit protein uS17 (Syntrophomonas wolfei subsp. wolfei (strain DSM 2245B / Goettingen)).